Here is a 75-residue protein sequence, read N- to C-terminus: Putative defensin-like protein 126 (75 aa).

Positions Met1–Gly24 are cleaved as a signal peptide. Intrachain disulfides connect Cys29/Cys73, Cys38/Cys57, Cys43/Cys67, and Cys47/Cys69.

It belongs to the DEFL family.

The protein resides in the secreted. In Arabidopsis thaliana (Mouse-ear cress), this protein is Putative defensin-like protein 126 (LCR6).